Here is a 104-residue protein sequence, read N- to C-terminus: Small ribosomal subunit protein bS16 (104 aa).

The protein belongs to the bacterial ribosomal protein bS16 family.

The chain is Small ribosomal subunit protein bS16 from Wolbachia pipientis subsp. Culex pipiens (strain wPip).